Reading from the N-terminus, the 344-residue chain is Methionine import ATP-binding protein MetN 1 (344 aa).

Positions 2–241 (IELRNLSQRF…PHHEVTRALI (240 aa)) constitute an ABC transporter domain. 38–45 (GRSGAGKS) serves as a coordination point for ATP.

Belongs to the ABC transporter superfamily. Methionine importer (TC 3.A.1.24) family. The complex is composed of two ATP-binding proteins (MetN), two transmembrane proteins (MetI) and a solute-binding protein (MetQ).

Its subcellular location is the cell inner membrane. The enzyme catalyses L-methionine(out) + ATP + H2O = L-methionine(in) + ADP + phosphate + H(+). It carries out the reaction D-methionine(out) + ATP + H2O = D-methionine(in) + ADP + phosphate + H(+). Part of the ABC transporter complex MetNIQ involved in methionine import. Responsible for energy coupling to the transport system. This chain is Methionine import ATP-binding protein MetN 1, found in Burkholderia orbicola (strain AU 1054).